Here is a 732-residue protein sequence, read N- to C-terminus: DNA ligase (732 aa).

Residues 47–51 (DAEYD), 96–97 (SI), and Glu133 contribute to the NAD(+) site. Catalysis depends on Lys135, which acts as the N6-AMP-lysine intermediate. Positions 156, 196, 317, and 341 each coordinate NAD(+). Positions 470, 473, 488, and 494 each coordinate Zn(2+). Positions 653 to 732 (RATLPLAGKT…AGMLALLQGR (80 aa)) constitute a BRCT domain.

The protein belongs to the NAD-dependent DNA ligase family. LigA subfamily. Mg(2+) serves as cofactor. The cofactor is Mn(2+).

It carries out the reaction NAD(+) + (deoxyribonucleotide)n-3'-hydroxyl + 5'-phospho-(deoxyribonucleotide)m = (deoxyribonucleotide)n+m + AMP + beta-nicotinamide D-nucleotide.. Its function is as follows. DNA ligase that catalyzes the formation of phosphodiester linkages between 5'-phosphoryl and 3'-hydroxyl groups in double-stranded DNA using NAD as a coenzyme and as the energy source for the reaction. It is essential for DNA replication and repair of damaged DNA. This Paracidovorax citrulli (strain AAC00-1) (Acidovorax citrulli) protein is DNA ligase.